The primary structure comprises 1482 residues: Cystic fibrosis transmembrane conductance regulator (1482 aa).

Topologically, residues Met-1–Phe-77 are cytoplasmic. A helical transmembrane segment spans residues Phe-78–Gln-98. An ABC transmembrane type-1 1 domain is found at Phe-81–Leu-365. The Extracellular segment spans residues Pro-99–Tyr-122. A helical transmembrane segment spans residues Leu-123 to His-146. Residues His-147–Leu-195 lie on the Cytoplasmic side of the membrane. A helical membrane pass occupies residues Ala-196–Trp-216. Residues Glu-217–Ser-222 lie on the Extracellular side of the membrane. The helical transmembrane segment at Ala-223 to Met-243 threads the bilayer. The Cytoplasmic portion of the chain corresponds to Met-244–Lys-298. Residues Ala-299 to Phe-319 traverse the membrane as a helical segment. At Leu-320–Thr-339 the chain is on the extracellular side. A helical transmembrane segment spans residues Ile-340–Val-358. Over Gln-359–Ser-859 the chain is Cytoplasmic. Residues Trp-401, Ser-434, Gly-458–Thr-465, and Gln-493 each bind ATP. The ABC transporter 1 domain maps to Asn-423–Gly-646. Cys-524 carries the S-palmitoyl cysteine lipid modification. Phosphoserine occurs at positions 549 and 660. Residues Thr-654–Glu-832 form a disordered R region region. Phosphoserine; by PKA is present on Ser-670. Position 686 is a phosphoserine (Ser-686). Residue Lys-688 forms a Glycyl lysine isopeptide (Lys-Gly) (interchain with G-Cter in ubiquitin) linkage. A phosphoserine mark is found at Ser-700 and Ser-712. Thr-717 carries the phosphothreonine modification. A phosphoserine mark is found at Ser-737, Ser-768, Ser-791, Ser-796, and Ser-814. The helical transmembrane segment at Leu-860–Val-880 threads the bilayer. Residues Leu-860–Ser-1156 form the ABC transmembrane type-1 2 domain. Residues Val-881–Ile-919 lie on the Extracellular side of the membrane. Asn-895 and Asn-901 each carry an N-linked (GlcNAc...) asparagine glycan. Residues Tyr-920–His-940 traverse the membrane as a discontinuously helical segment. Over Thr-941–Thr-991 the chain is Cytoplasmic. The helical transmembrane segment at Ile-992–Leu-1012 threads the bilayer. Residues Lys-1013–Pro-1014 lie on the Extracellular side of the membrane. A helical transmembrane segment spans residues Tyr-1015–Leu-1035. Residues His-1036–Thr-1096 lie on the Cytoplasmic side of the membrane. The chain crosses the membrane as a helical span at residues Leu-1097–Phe-1117. Over Ile-1118–Gly-1131 the chain is Extracellular. The chain crosses the membrane as a helical span at residues Ile-1132–Ile-1152. The Cytoplasmic segment spans residues Asp-1153–Leu-1482. Positions Met-1212–Pro-1445 constitute an ABC transporter 2 domain. ATP-binding positions include Tyr-1221 and Gly-1246–Ser-1253. Residues Arg-1388–Leu-1482 are interaction with GORASP2. Cys-1397 carries the S-palmitoyl cysteine lipid modification. Basic residues predominate over residues His-1454 to Ser-1464. The disordered stretch occupies residues His-1454–Leu-1482. The residue at position 1458 (Ser-1458) is a Phosphoserine. Acidic residues predominate over residues Glu-1472–Leu-1482. Residues Thr-1480 to Leu-1482 carry the PDZ-binding motif.

Belongs to the ABC transporter superfamily. ABCC family. CFTR transporter (TC 3.A.1.202) subfamily. As to quaternary structure, monomer; does not require oligomerization for channel activity. May form oligomers in the membrane. Interacts with SLC26A3, SLC26A6 and NHERF1. Interacts with SHANK2. Interacts with MYO6. Interacts (via C-terminus) with GOPC (via PDZ domain); this promotes CFTR internalization and thereby decreases channel activity. Interacts with SLC4A7 through NHERF1. Found in a complex with MYO5B and RAB11A. Interacts with ANO1. Interacts with SLC26A8. Interacts with AHCYL1; the interaction increases CFTR activity. Interacts with CSE1L. The core-glycosylated form interacts with GORASP2 (via PDZ GRASP-type 1 domain) in respone to ER stress. Interacts with MARCHF2; the interaction leads to CFTR ubiqtuitination and degradation. Interacts with ADGRG2. N-glycosylated. Post-translationally, phosphorylated; cAMP treatment promotes phosphorylation and activates the channel. Dephosphorylation decreases the ATPase activity (in vitro). Phosphorylation at PKA sites activates the channel. Phosphorylation at PKC sites enhances the response to phosphorylation by PKA. Phosphorylated by AMPK; this inhibits channel activity. In terms of processing, ubiquitinated, leading to its degradation in the lysosome. Deubiquitination by USP10 in early endosomes enhances its endocytic recycling to the cell membrane. Ubiquitinated by RNF185 during ER stress. Ubiquitinated by MARCHF2.

The protein resides in the apical cell membrane. It is found in the early endosome membrane. It localises to the cell membrane. Its subcellular location is the recycling endosome membrane. The protein localises to the endoplasmic reticulum membrane. The protein resides in the nucleus. The enzyme catalyses ATP + H2O + closed Cl(-) channel = ADP + phosphate + open Cl(-) channel.. It carries out the reaction chloride(in) = chloride(out). It catalyses the reaction hydrogencarbonate(in) = hydrogencarbonate(out). The catalysed reaction is ATP + H2O = ADP + phosphate + H(+). Epithelial ion channel that plays an important role in the regulation of epithelial ion and water transport and fluid homeostasis. Mediates the transport of chloride ions across the cell membrane. Possesses an intrinsic ATPase activity and utilizes ATP to gate its channel; the passive flow of anions through the channel is gated by cycles of ATP binding and hydrolysis by the ATP-binding domains. The ion channel is also permeable to HCO(3)(-); selectivity depends on the extracellular chloride concentration. Exerts its function also by modulating the activity of other ion channels and transporters. Contributes to the regulation of the pH and the ion content of the epithelial fluid layer. Modulates the activity of the epithelial sodium channel (ENaC) complex, in part by regulating the cell surface expression of the ENaC complex. May regulate bicarbonate secretion and salvage in epithelial cells by regulating the transporter SLC4A7. Can inhibit the chloride channel activity of ANO1. Plays a role in the chloride and bicarbonate homeostasis during sperm epididymal maturation and capacitation. The chain is Cystic fibrosis transmembrane conductance regulator from Sus scrofa (Pig).